Consider the following 832-residue polypeptide: Protein P (832 aa).

The tract at residues 1–177 is terminal protein domain (TP); sequence MPLSCPHFRK…FCGSPYSWEQ (177 aa). The interval 178–335 is spacer; it reads ELQHGAEPVC…YCLSHLVNLL (158 aa). Over residues 208-224 the composition is skewed to low complexity; it reads KQSRLGLQSQQRQLARS. The segment at 208–241 is disordered; that stretch reads KQSRLGLQSQQRQLARSHQGRSGSIRARVHSTTR. The polymerase/reverse transcriptase domain (RT) stretch occupies residues 336-679; it reads EDWGPCTEHG…YLTLYPVARQ (344 aa). Positions 346–589 constitute a Reverse transcriptase domain; it reads EHHIRIPRTP…YSLNFMGYII (244 aa). Residues Asp418, Asp540, and Asp541 each contribute to the Mg(2+) site.

The protein belongs to the hepadnaviridae P protein family.

The enzyme catalyses DNA(n) + a 2'-deoxyribonucleoside 5'-triphosphate = DNA(n+1) + diphosphate. The catalysed reaction is Endonucleolytic cleavage to 5'-phosphomonoester.. With respect to regulation, activated by host HSP70 and HSP40 in vitro to be able to bind the epsilon loop of the pgRNA. Because deletion of the RNase H region renders the protein partly chaperone-independent, the chaperones may be needed indirectly to relieve occlusion of the RNA-binding site by this domain. Inhibited by several reverse-transcriptase inhibitors: Lamivudine, Adefovir and Entecavir. In terms of biological role, multifunctional enzyme that converts the viral RNA genome into dsDNA in viral cytoplasmic capsids. This enzyme displays a DNA polymerase activity that can copy either DNA or RNA templates, and a ribonuclease H (RNase H) activity that cleaves the RNA strand of RNA-DNA heteroduplexes in a partially processive 3'- to 5'-endonucleasic mode. Neo-synthesized pregenomic RNA (pgRNA) are encapsidated together with the P protein, and reverse-transcribed inside the nucleocapsid. Initiation of reverse-transcription occurs first by binding the epsilon loop on the pgRNA genome, and is initiated by protein priming, thereby the 5'-end of (-)DNA is covalently linked to P protein. Partial (+)DNA is synthesized from the (-)DNA template and generates the relaxed circular DNA (RC-DNA) genome. After budding and infection, the RC-DNA migrates in the nucleus, and is converted into a plasmid-like covalently closed circular DNA (cccDNA). The activity of P protein does not seem to be necessary for cccDNA generation, and is presumably released from (+)DNA by host nuclear DNA repair machinery. In Gibbon hepatitis B virus subtype ayw3q (isolate Hope) (HBVgbn), this protein is Protein P.